A 137-amino-acid chain; its full sequence is Peptide methionine sulfoxide reductase MsrB (137 aa).

One can recognise a MsrB domain in the interval 9–131 (DAEWRAMLDD…NSASLRFDAT (123 aa)). The Zn(2+) site is built by Cys-48, Cys-51, Cys-97, and Cys-100. Cys-120 functions as the Nucleophile in the catalytic mechanism.

This sequence belongs to the MsrB Met sulfoxide reductase family. It depends on Zn(2+) as a cofactor.

The catalysed reaction is L-methionyl-[protein] + [thioredoxin]-disulfide + H2O = L-methionyl-(R)-S-oxide-[protein] + [thioredoxin]-dithiol. This is Peptide methionine sulfoxide reductase MsrB from Herminiimonas arsenicoxydans.